The primary structure comprises 324 residues: Lipid droplet-associated hydrolase (324 aa).

Ser136 functions as the Nucleophile in the catalytic mechanism. Active-site charge relay system residues include Asp270 and His299.

It belongs to the AB hydrolase superfamily. LDAH family.

The protein resides in the lipid droplet. It is found in the endoplasmic reticulum. The catalysed reaction is a cholesterol ester + H2O = cholesterol + a fatty acid + H(+). In terms of biological role, probable serine lipid hydrolase associated with lipid droplets. Has low cholesterol esterase activity. Appears to lack triglyceride lipase activity. Involved in cholesterol and triglyceride homeostasis; stimulates cellular triglyceride accumulation and cellular cholesterol release. This Gallus gallus (Chicken) protein is Lipid droplet-associated hydrolase.